We begin with the raw amino-acid sequence, 650 residues long: MSTQSLYKVPSEIAANALVNDEQYKKMYQESIVNPEGFWREHGNRIDWIKPFTKVKKTSFDDHNLFIKWFYDGTLNASANCLDRHLENNADKLAIIWEGDDAKDQRTLTYGQLHTQVCKFANALRSQGVRRGDVVTIYMPMVPEAAVAMLACARIGAIHSVVFGGFSPDSIASRVIDGNSKVVITADEGVRAGRIIPLKANIDEALSHPDVNCVEKVIVMKRTGGDINWVEGRDIWWDSLMDTASEHCIAEEMGAEDPLFLLYTSGSTGNPKGVLHTTGGYMVYAAMTHEYVFDYKENEVYWCTADVGWITGHSYMVYGPLANGATVLIHEGVPNYPSPARLGEMVDRHKVNILYTAPTLIRALMAEGKEQFAGFDGSSLRIMGSVGEPINPEAWRWYNDVIGHEKCPIVDTWWQTETGGILISPLPGATDTKPGSATRPFFGVQPALVDNMGNIVDGASEGNLVILDSWPGQMRTVFGDHDRFVLTYFKTFRGMYFTGDGAKRDEDGYYWITGRVDDVINVSGHRLGTAEVESALVAHEFVAEAAVVGYPHDIKGQGIYAYVTLTKGSVETEELRQELRQWVRKEIGALATPDLIQWAGGLPKTRSGKIMRRFLRKIAANEVSNLGDSSTLADPAVIDTLIETRLNRSE.

Residues R191–R194, T311, and N335 contribute to the CoA site. ATP is bound by residues G387–P389, D411–T416, D500, and R515. S523 provides a ligand contact to CoA. Position 526 (R526) interacts with ATP. V537, H539, and V542 together coordinate Mg(2+). R584 provides a ligand contact to CoA. N6-acetyllysine is present on K609.

The protein belongs to the ATP-dependent AMP-binding enzyme family. Mg(2+) serves as cofactor. In terms of processing, acetylated. Deacetylation by the SIR2-homolog deacetylase activates the enzyme.

It carries out the reaction acetate + ATP + CoA = acetyl-CoA + AMP + diphosphate. In terms of biological role, catalyzes the conversion of acetate into acetyl-CoA (AcCoA), an essential intermediate at the junction of anabolic and catabolic pathways. AcsA undergoes a two-step reaction. In the first half reaction, AcsA combines acetate with ATP to form acetyl-adenylate (AcAMP) intermediate. In the second half reaction, it can then transfer the acetyl group from AcAMP to the sulfhydryl group of CoA, forming the product AcCoA. This Shewanella halifaxensis (strain HAW-EB4) protein is Acetyl-coenzyme A synthetase.